The following is a 115-amino-acid chain: Toxin-like structure LSTX-D2 (115 aa).

The signal sequence occupies residues 1–22 (MKVLVLFSVLFLTLFSYSSTEA). Residues 23–44 (IDEFDSDAEDDMLSLMANEQVR) constitute a propeptide that is removed on maturation. Cystine bridges form between cysteine 48–cysteine 63, cysteine 55–cysteine 72, cysteine 62–cysteine 87, and cysteine 74–cysteine 85.

The protein belongs to the neurotoxin 19 (CSTX) family. 01 subfamily. As to expression, expressed by the venom gland.

It is found in the secreted. The sequence is that of Toxin-like structure LSTX-D2 from Lycosa singoriensis (Wolf spider).